Here is a 25-residue protein sequence, read N- to C-terminus: Chlorocatechol 1,2-dioxygenase 1 (25 aa).

Belongs to the intradiol ring-cleavage dioxygenase family. Fe(3+) is required as a cofactor.

The catalysed reaction is 3,5-dichlorocatechol + O2 = (2E,4E)-2,4-dichloromuconate + 2 H(+). It participates in xenobiotic degradation; 2-(2,4-dichlorophenoxy)propanoate degradation. This is Chlorocatechol 1,2-dioxygenase 1 (tfdC) from Delftia acidovorans (Pseudomonas acidovorans).